The primary structure comprises 274 residues: MRIDVVSIFPEYLAPLELSLIGKARQDGILDLNVHDLREFTTDKHRSVDDTPYGGGAGMVMKAEPWAQALSTVAAARAGDAARKPVLIVPSPAGERFTQALAHELAGEEQLVFACGRYEGIDERVIEWAEEHFTVRPMSLGDYVLNGGEVAVLAMTEAIVRLLPGVVGNPESLVEESHSDGLLEYPVYTKPSSWRDREVPPVLLSGNHGKIAQWRRHQQYRRTAQRRPDLLAEFDAGNLPRADRTALGDLGYDVVDGHLRHRPEEPGNGAPADG.

Residues Gly116 and 140–145 (LGDYVL) contribute to the S-adenosyl-L-methionine site.

The protein belongs to the RNA methyltransferase TrmD family. Homodimer.

The protein resides in the cytoplasm. It carries out the reaction guanosine(37) in tRNA + S-adenosyl-L-methionine = N(1)-methylguanosine(37) in tRNA + S-adenosyl-L-homocysteine + H(+). Functionally, specifically methylates guanosine-37 in various tRNAs. This is tRNA (guanine-N(1)-)-methyltransferase from Arthrobacter sp. (strain FB24).